We begin with the raw amino-acid sequence, 78 residues long: uncharacterized protein (78 aa).

Residues 13-33 form a helical membrane-spanning segment; sequence STILILLMSVLILLLSIDILA.

It is found in the membrane. This is an uncharacterized protein from Methanocaldococcus jannaschii (strain ATCC 43067 / DSM 2661 / JAL-1 / JCM 10045 / NBRC 100440) (Methanococcus jannaschii).